Here is a 1030-residue protein sequence, read N- to C-terminus: MMS19 nucleotide excision repair protein homolog (1030 aa).

A2 bears the N-acetylalanine mark. Position 496 is an N6-acetyllysine (K496). HEAT repeat units follow at residues 866-904, 908-946, 949-987, and 990-1028; these read QRFFTDNVPALVQGFHAAPQDVKPNYLKGLSHVLNRLPK, LPELPTLLSLLLEALSCPDCVVQLSTLSCLQPLLLEAPQ, SLHVDTLVTKFLNLSSSPSMAVRIAALQCMHALTRLPTP, and LPYKPQVIRALAKPLDDKKRLVRKEAVSARGEWFLLGSP. Residue S1027 is modified to Phosphoserine.

Belongs to the MET18/MMS19 family. Component of the CIA complex. In the CIA complex, interacts directly with CIAO2B and CIAO3. Component of the MMXD complex, composed of CIAO1, ERCC2, CIAO2B, MMS19 and SLC25A5. Interacts with CIAO2B; the interaction is direct. Interacts with ERCC2/XPD; the interaction is direct. Interacts with ERCC3/XPB and NCOA3/RAC3. Interacts with RTEL1; the interaction mediates the association of RTEL1 with the CIA complex. Interacts with BRIP1. Interacts with KIF4A; the interaction facilitates the transfer of Fe-S clusters to KIF4A to ensure proper localization of KIF4A to the mitotic machinery components. Interacts with CCDC117; the interaction is indirect. Ubiquitinated; undergoes 'Lys-48'-linked polyubiquitination by MAGEF1-NSMCE1 ubiquitin ligase complex leading to proteasomal degradation. Ubiquitously expressed with higher expression in testis.

Its subcellular location is the nucleus. It is found in the cytoplasm. The protein resides in the cytoskeleton. The protein localises to the spindle. It localises to the microtubule organizing center. Its subcellular location is the centrosome. In terms of biological role, key component of the cytosolic iron-sulfur protein assembly (CIA) complex, a multiprotein complex that mediates the incorporation of iron-sulfur cluster into apoproteins specifically involved in DNA metabolism and genomic integrity. In the CIA complex, MMS19 acts as an adapter between early-acting CIA components and a subset of cellular target iron-sulfur proteins such as ERCC2/XPD, FANCJ and RTEL1, thereby playing a key role in nucleotide excision repair (NER), homologous recombination-mediated double-strand break DNA repair, DNA replication and RNA polymerase II (POL II) transcription. As part of the mitotic spindle-associated MMXD complex, plays a role in chromosome segregation, probably by facilitating iron-sulfur (Fe-S) cluster assembly into ERCC2/XPD. Together with CIAO2, facilitates the transfer of Fe-S clusters to the motor protein KIF4A, which ensures proper localization of KIF4A to mitotic machinery components to promote the progression of mitosis. Indirectly acts as a transcriptional coactivator of estrogen receptor (ER), via its role in iron-sulfur insertion into some component of the TFIIH-machinery. In Homo sapiens (Human), this protein is MMS19 nucleotide excision repair protein homolog.